The following is a 313-amino-acid chain: tRNA dimethylallyltransferase (313 aa).

Residue 9–16 (GPTATGKS) participates in ATP binding. A substrate-binding site is contributed by 11-16 (TATGKS).

This sequence belongs to the IPP transferase family. In terms of assembly, monomer. It depends on Mg(2+) as a cofactor.

It carries out the reaction adenosine(37) in tRNA + dimethylallyl diphosphate = N(6)-dimethylallyladenosine(37) in tRNA + diphosphate. Functionally, catalyzes the transfer of a dimethylallyl group onto the adenine at position 37 in tRNAs that read codons beginning with uridine, leading to the formation of N6-(dimethylallyl)adenosine (i(6)A). This Nocardia farcinica (strain IFM 10152) protein is tRNA dimethylallyltransferase.